The sequence spans 219 residues: Poxin (219 aa).

Residue H17 is the Proton donor of the active site. Y138 acts as the Shared with catalytic histidine of dimeric partner in catalysis. Catalysis depends on K142, which acts as the Proton acceptor; shared with catalytic histidine of dimeric partner.

This sequence belongs to the poxin family. As to quaternary structure, homodimer.

It catalyses the reaction 2',3'-cGAMP + H2O = Gp(2'-5')Ap(3') + H(+). In terms of biological role, nuclease that is responsible for viral evasion of host cGAS-STING innate immunity. Cleaves 2',3'-cGAMP which is produced by host cGAS following recognition of cytosolic DNA and blocks the subsequent 2',3'-cGAMP-mediated activation of TMEM173/STING, which normally spreads to adjacent cells and activates the interferon and NF-kappa-B immune responses. In Homo sapiens (Human), this protein is Poxin (OPG188).